A 446-amino-acid chain; its full sequence is Thymidine phosphorylase (446 aa).

It belongs to the thymidine/pyrimidine-nucleoside phosphorylase family. Homodimer.

It catalyses the reaction thymidine + phosphate = 2-deoxy-alpha-D-ribose 1-phosphate + thymine. Its pathway is pyrimidine metabolism; dTMP biosynthesis via salvage pathway; dTMP from thymine: step 1/2. In terms of biological role, the enzymes which catalyze the reversible phosphorolysis of pyrimidine nucleosides are involved in the degradation of these compounds and in their utilization as carbon and energy sources, or in the rescue of pyrimidine bases for nucleotide synthesis. The polypeptide is Thymidine phosphorylase (Idiomarina loihiensis (strain ATCC BAA-735 / DSM 15497 / L2-TR)).